The chain runs to 126 residues: Small ribosomal subunit protein uS13 (126 aa).

The segment at 99–126 is disordered; that stretch reads LRGQSTKNNARTRKGKKKTVANKKKATK. The span at 108 to 126 shows a compositional bias: basic residues; the sequence is ARTRKGKKKTVANKKKATK.

It belongs to the universal ribosomal protein uS13 family. As to quaternary structure, part of the 30S ribosomal subunit. Forms a loose heterodimer with protein S19. Forms two bridges to the 50S subunit in the 70S ribosome.

Functionally, located at the top of the head of the 30S subunit, it contacts several helices of the 16S rRNA. In the 70S ribosome it contacts the 23S rRNA (bridge B1a) and protein L5 of the 50S subunit (bridge B1b), connecting the 2 subunits; these bridges are implicated in subunit movement. Contacts the tRNAs in the A and P-sites. This Porphyromonas gingivalis (strain ATCC 33277 / DSM 20709 / CIP 103683 / JCM 12257 / NCTC 11834 / 2561) protein is Small ribosomal subunit protein uS13.